The primary structure comprises 221 residues: MSLSKEEKLQLFKSYNIYGLTAEKFSNGRSNIEVVKAMLESGIKIIQYREKHKSLKEKYEECLQIRELTKQYGALLIVNDHVDLCQMVGADGVHLGQEDYPAKEVRKILGEDFIIGVTTHTKEQVEKAVEDGADYIGLGPVFQSFTKDKPHPPIGLEMVRWAATYCKIPFVAIGGIKEHNLKDVLKAGAKCVSLVTEIVGSDDISQKIKKLWDIIKEFERS.

4-amino-2-methyl-5-(diphosphooxymethyl)pyrimidine contacts are provided by residues 47-51 (QYREK) and Asn-79. Positions 80 and 99 each coordinate Mg(2+). Thr-118 is a 4-amino-2-methyl-5-(diphosphooxymethyl)pyrimidine binding site. Residue 144–146 (SFT) participates in 2-[(2R,5Z)-2-carboxy-4-methylthiazol-5(2H)-ylidene]ethyl phosphate binding. Lys-147 lines the 4-amino-2-methyl-5-(diphosphooxymethyl)pyrimidine pocket. 2-[(2R,5Z)-2-carboxy-4-methylthiazol-5(2H)-ylidene]ethyl phosphate is bound by residues Gly-175 and 195–196 (VT).

The protein belongs to the thiamine-phosphate synthase family. The cofactor is Mg(2+).

It catalyses the reaction 2-[(2R,5Z)-2-carboxy-4-methylthiazol-5(2H)-ylidene]ethyl phosphate + 4-amino-2-methyl-5-(diphosphooxymethyl)pyrimidine + 2 H(+) = thiamine phosphate + CO2 + diphosphate. The catalysed reaction is 2-(2-carboxy-4-methylthiazol-5-yl)ethyl phosphate + 4-amino-2-methyl-5-(diphosphooxymethyl)pyrimidine + 2 H(+) = thiamine phosphate + CO2 + diphosphate. The enzyme catalyses 4-methyl-5-(2-phosphooxyethyl)-thiazole + 4-amino-2-methyl-5-(diphosphooxymethyl)pyrimidine + H(+) = thiamine phosphate + diphosphate. It functions in the pathway cofactor biosynthesis; thiamine diphosphate biosynthesis; thiamine phosphate from 4-amino-2-methyl-5-diphosphomethylpyrimidine and 4-methyl-5-(2-phosphoethyl)-thiazole: step 1/1. Condenses 4-methyl-5-(beta-hydroxyethyl)thiazole monophosphate (THZ-P) and 2-methyl-4-amino-5-hydroxymethyl pyrimidine pyrophosphate (HMP-PP) to form thiamine monophosphate (TMP). The protein is Thiamine-phosphate synthase of Caldicellulosiruptor saccharolyticus (strain ATCC 43494 / DSM 8903 / Tp8T 6331).